Consider the following 138-residue polypeptide: Acidic phospholipase A2 BthA-1 (138 aa).

The N-terminal stretch at 1 to 16 (MRTLWIMAVLLVGVEG) is a signal peptide. 7 cysteine pairs are disulfide-bonded: cysteine 42–cysteine 131, cysteine 44–cysteine 60, cysteine 59–cysteine 111, cysteine 65–cysteine 138, cysteine 66–cysteine 104, cysteine 73–cysteine 97, and cysteine 91–cysteine 102. 3 residues coordinate Ca(2+): tyrosine 43, glycine 47, and glycine 48. The active site involves histidine 63. Residue aspartate 64 coordinates Ca(2+). Residue aspartate 105 is part of the active site.

Belongs to the phospholipase A2 family. Group II subfamily. D49 sub-subfamily. As to quaternary structure, homodimer; non-covalently linked. Ca(2+) is required as a cofactor. In terms of tissue distribution, expressed by the venom gland.

The protein localises to the secreted. It carries out the reaction a 1,2-diacyl-sn-glycero-3-phosphocholine + H2O = a 1-acyl-sn-glycero-3-phosphocholine + a fatty acid + H(+). Inhibited by EDTA and bromophenacyl bromide (BPB). Functionally, snake venom phospholipase A2 (PLA2) that displays edema-inducing activities (activity that is inhibited by EDTA and dexamethasone), inhibits phospholipid-dependent collagen/ADP-induced platelet aggregation, possess hypotensive as well as anticoagulant activities. In addition, this enzyme shows bactericidal activity against E.coli and S.aureus. PLA2 catalyzes the calcium-dependent hydrolysis of the 2-acyl groups in 3-sn-phosphoglycerides. The sequence is that of Acidic phospholipase A2 BthA-1 from Bothrops jararacussu (Jararacussu).